The following is a 78-amino-acid chain: Large ribosomal subunit protein bL28 (78 aa).

Residues 1–20 (MSRVCQVTGKRPVTGNNRSH) form a disordered region.

It belongs to the bacterial ribosomal protein bL28 family.

The sequence is that of Large ribosomal subunit protein bL28 from Vibrio parahaemolyticus serotype O3:K6 (strain RIMD 2210633).